A 143-amino-acid chain; its full sequence is Large ribosomal subunit protein bL28c (143 aa).

The transit peptide at 1–66 directs the protein to the chloroplast; that stretch reads MTTMATQGAW…SFPGIQPIVA (66 aa).

This sequence belongs to the bacterial ribosomal protein bL28 family. Part of the 50S ribosomal subunit.

It is found in the plastid. It localises to the chloroplast. This chain is Large ribosomal subunit protein bL28c (RPL28), found in Arabidopsis thaliana (Mouse-ear cress).